The chain runs to 391 residues: MAFATLVGVGGLSPALFSPSRPLSCSSSTSVSAPFILRAGGGGDARRHGLRRLVTPLRGSACRGESTNSRVLQCANEANVVTEDDIVNDGIDDETASDAEMDEDAEANGDESSGTDEDASVSWIEQQPLPYPSDALEPYISKETVEQHWGVHQNIHVERLNGMIGGSEWEGMSLGQMMLSSFNEGREAPHPPFFHAAQIWNHDFYWRSMQPGGGGKPPERLLKFINRDFGSYDGMIRQFMDAASTQFGSGWVWLCYKTSKLPHVKSRSPIPSDNYGRLVISKSPNAINPLVWGHSPLLAIDLWEHAYYLDYEDRRSDYVSTFLEKLVSWETVESRLKKAVQRAVERDEYVSTKHIRKQLLARAKSQIRAMPQQVNGDAREQTSGQEKSLGV.

The N-terminal 73 residues, 1 to 73 (MAFATLVGVG…GESTNSRVLQ (73 aa)), are a transit peptide targeting the chloroplast. Residues 87 to 119 (VNDGIDDETASDAEMDEDAEANGDESSGTDEDA) are compositionally biased toward acidic residues. A disordered region spans residues 87–120 (VNDGIDDETASDAEMDEDAEANGDESSGTDEDAS). Residues His148, His202, Asp301, and His305 each contribute to the Fe cation site. The disordered stretch occupies residues 370-391 (MPQQVNGDAREQTSGQEKSLGV). The span at 381 to 391 (QTSGQEKSLGV) shows a compositional bias: polar residues.

It belongs to the iron/manganese superoxide dismutase family. In terms of assembly, homodimer. It depends on Fe cation as a cofactor.

It is found in the plastid. The protein localises to the chloroplast. It catalyses the reaction 2 superoxide + 2 H(+) = H2O2 + O2. Its function is as follows. Destroys superoxide anion radicals which are normally produced within the cells and which are toxic to biological systems. This Oryza sativa subsp. japonica (Rice) protein is Superoxide dismutase [Fe] 1, chloroplastic.